The following is a 250-amino-acid chain: 6-phosphogluconate dehydrogenase, decarboxylating (250 aa).

The substrate site is built by Lys-29 and Arg-56. Lys-77 bears the N6-acetyllysine mark. Positions 214 and 220 each coordinate substrate. 245-248 (SSSY) is a binding site for NADP(+).

It belongs to the 6-phosphogluconate dehydrogenase family. In terms of assembly, homodimer.

The protein localises to the cytoplasm. The enzyme catalyses 6-phospho-D-gluconate + NADP(+) = D-ribulose 5-phosphate + CO2 + NADPH. It functions in the pathway carbohydrate degradation; pentose phosphate pathway; D-ribulose 5-phosphate from D-glucose 6-phosphate (oxidative stage): step 3/3. In terms of biological role, catalyzes the oxidative decarboxylation of 6-phosphogluconate to ribulose 5-phosphate and CO(2), with concomitant reduction of NADP to NADPH. The polypeptide is 6-phosphogluconate dehydrogenase, decarboxylating (PGD) (Sus scrofa (Pig)).